Consider the following 206-residue polypeptide: LexA repressor (206 aa).

Positions 28-48 form a DNA-binding region, H-T-H motif; the sequence is RAEIATRLGFKSANAAEEHLK. Catalysis depends on for autocatalytic cleavage activity residues Ser123 and Lys160.

The protein belongs to the peptidase S24 family. In terms of assembly, homodimer.

It catalyses the reaction Hydrolysis of Ala-|-Gly bond in repressor LexA.. In terms of biological role, represses a number of genes involved in the response to DNA damage (SOS response), including recA and lexA. In the presence of single-stranded DNA, RecA interacts with LexA causing an autocatalytic cleavage which disrupts the DNA-binding part of LexA, leading to derepression of the SOS regulon and eventually DNA repair. The sequence is that of LexA repressor from Shewanella sp. (strain ANA-3).